The following is a 215-amino-acid chain: MATERHYSPLDRLLLQADSAMRTLLPLSAHPQRPSPAVVQPDHKMSDVDTRHVAGLMRINHTGEVCAQALYQGQALTAKLPKVRKAMEHAAEEEIDHLVWCEQRIHQLGSHTSVLNPLFYGLSFGIGAVAGVISDRVSLGFVAATEDQVCKHLSEHLEQLPSEDGKSRAILEQMLNDEEHHAESALEAGGFRFPAPVKFGMSILAKVMTKSTYRI.

The Fe cation site is built by Glu64, Glu94, His97, Glu146, Glu178, and His181.

This sequence belongs to the COQ7 family. It depends on Fe cation as a cofactor.

The protein localises to the cell membrane. The enzyme catalyses a 5-methoxy-2-methyl-3-(all-trans-polyprenyl)benzene-1,4-diol + AH2 + O2 = a 3-demethylubiquinol + A + H2O. It functions in the pathway cofactor biosynthesis; ubiquinone biosynthesis. Its function is as follows. Catalyzes the hydroxylation of 2-nonaprenyl-3-methyl-6-methoxy-1,4-benzoquinol during ubiquinone biosynthesis. The sequence is that of 3-demethoxyubiquinol 3-hydroxylase from Pseudomonas savastanoi pv. phaseolicola (strain 1448A / Race 6) (Pseudomonas syringae pv. phaseolicola (strain 1448A / Race 6)).